We begin with the raw amino-acid sequence, 860 residues long: Leucine--tRNA ligase (860 aa).

Positions 42–52 match the 'HIGH' region motif; that stretch reads PYPSGRLHMGH. The 'KMSKS' region motif lies at 619–623; that stretch reads KMSKS. Lys622 provides a ligand contact to ATP.

It belongs to the class-I aminoacyl-tRNA synthetase family.

The protein localises to the cytoplasm. The enzyme catalyses tRNA(Leu) + L-leucine + ATP = L-leucyl-tRNA(Leu) + AMP + diphosphate. This is Leucine--tRNA ligase from Escherichia coli (strain 55989 / EAEC).